Consider the following 255-residue polypeptide: MDSCRMTTEVILHYRPYENDPKQLAKIAENVIQDFPTHPLPRFIPWFPYDESKLPLKPERLPPVISEEAAESVKQYLAISEPGVKSQSYDCTVDLLEFQPSSKLQHFIQSHTVKEQTNAAHLDKNSGKEKQHKQRSWSVSLASSHCPEKIFPLSRKLQASLRTLHLHSFHRARWTLEYSVCNNQTLEDIWTKLNRLIRRDELPSCNATIQRQLGQIWVFCDIKCCEYVGNLLKERLSLIGKIDLFVHKYGVIFSM.

The sufficient for interaction with MAD2L2 stretch occupies residues glutamine 33–serine 88. The segment at glutamine 116 to arginine 135 is disordered.

As to quaternary structure, component of the shieldin complex, consisting of SHLD1, SHLD2, SHLD3 and MAD2L2/REV7. Within the complex, SHLD2 forms a scaffold which interacts with a SHLD3-MAD2L2 subcomplex via its N-terminus, and with SHLD1 via its C-terminus. Interacts with ASTE1.

It localises to the chromosome. Functionally, component of the shieldin complex, which plays an important role in repair of DNA double-stranded breaks (DSBs). During G1 and S phase of the cell cycle, the complex functions downstream of TP53BP1 to promote non-homologous end joining (NHEJ) and suppress DNA end resection. Mediates various NHEJ-dependent processes including immunoglobulin class-switch recombination, and fusion of unprotected telomeres. In Mus musculus (Mouse), this protein is Shieldin complex subunit 3.